Consider the following 1083-residue polypeptide: Integrator complex subunit 3 homolog (1083 aa).

3 disordered regions span residues 551–579, 929–953, and 1014–1083; these read NEAVFSDDENLPSTSKNEENTDDDDDLPL, YPSSSPNKRKRPSKGSSAASSTPSA, and AVGR…NDSD. Over residues 942–953 the composition is skewed to low complexity; it reads KGSSAASSTPSA. 4 positions are modified to phosphoserine: Ser1053, Ser1054, Ser1058, and Ser1059. Over residues 1066-1077 the composition is skewed to basic residues; that stretch reads HKVTQPAKKRKK.

It belongs to the Integrator subunit 3 family. In terms of assembly, belongs to the multiprotein complex Integrator, at least composed of IntS1, IntS2, IntS3, IntS4, omd/IntS5, IntS6, defl/IntS7, IntS8, IntS9, IntS10, IntS11, IntS12, asun/IntS13, IntS14 and IntS15. The core complex associates with protein phosphatase 2A subunits mts/PP2A and Pp2A-29B, to form the Integrator-PP2A (INTAC) complex.

It localises to the nucleus. The protein localises to the cytoplasm. Component of the integrator complex, a multiprotein complex that terminates RNA polymerase II (Pol II) transcription in the promoter-proximal region of genes. The integrator complex provides a quality checkpoint during transcription elongation by driving premature transcription termination of transcripts that are unfavorably configured for transcriptional elongation: the complex terminates transcription by (1) catalyzing dephosphorylation of the C-terminal domain (CTD) of Pol II subunit Polr2A/Rbp1 and Spt5, and (2) degrading the exiting nascent RNA transcript via endonuclease activity. The integrator complex is also involved in the 3'-end processing of the U7 snRNA, and also the spliceosomal snRNAs U1, U2, U4 and U5. The polypeptide is Integrator complex subunit 3 homolog (IntS3) (Drosophila grimshawi (Hawaiian fruit fly)).